Consider the following 554-residue polypeptide: CTP synthase (554 aa).

Residues methionine 1–leucine 265 form an amidoligase domain region. Position 13 (serine 13) interacts with CTP. Serine 13 contributes to the UTP binding site. ATP contacts are provided by residues serine 14–isoleucine 19 and aspartate 71. Positions 71 and 139 each coordinate Mg(2+). Residues aspartate 146–glutamate 148, lysine 186–glutamine 191, and lysine 222 each bind CTP. Residues lysine 186–glutamine 191 and lysine 222 each bind UTP. Residues threonine 292–glycine 545 enclose the Glutamine amidotransferase type-1 domain. Position 353 (glycine 353) interacts with L-glutamine. The active-site Nucleophile; for glutamine hydrolysis is cysteine 380. Residues tyrosine 381–glutamine 384, glutamate 404, and arginine 471 each bind L-glutamine. Catalysis depends on residues histidine 518 and glutamate 520.

Belongs to the CTP synthase family. Homotetramer.

It carries out the reaction UTP + L-glutamine + ATP + H2O = CTP + L-glutamate + ADP + phosphate + 2 H(+). The enzyme catalyses L-glutamine + H2O = L-glutamate + NH4(+). It catalyses the reaction UTP + NH4(+) + ATP = CTP + ADP + phosphate + 2 H(+). It functions in the pathway pyrimidine metabolism; CTP biosynthesis via de novo pathway; CTP from UDP: step 2/2. Its activity is regulated as follows. Allosterically activated by GTP, when glutamine is the substrate; GTP has no effect on the reaction when ammonia is the substrate. The allosteric effector GTP functions by stabilizing the protein conformation that binds the tetrahedral intermediate(s) formed during glutamine hydrolysis. Inhibited by the product CTP, via allosteric rather than competitive inhibition. Catalyzes the ATP-dependent amination of UTP to CTP with either L-glutamine or ammonia as the source of nitrogen. Regulates intracellular CTP levels through interactions with the four ribonucleotide triphosphates. This Xanthomonas campestris pv. campestris (strain 8004) protein is CTP synthase.